Reading from the N-terminus, the 426-residue chain is MSKSENLYSAARELIPGGVNSPVRAFTGVGGTPLFIEKADGAYLYDVDGKAYIDYVGSWGPMVLGHNHPAIRNAVIEAAERGLSFGAPTEMEVKMAELVTNLVPTMDMVRMVNSGTEATMSAIRLARGFTGRDKIIKFEGCYHGHADCLLVKAGSGALTLGQPNSPGVPADFAKHTLTCTYNNLASVRAAFEQYPQEIACIIVEPVAGNMNCVPPLPEFLPGLRALCDEFGALLIIDEVMTGFRVALAGAQDYYGVVPDLTCLGKIIGGGMPVGAFGGRRDVMDALAPTGPVYQAGTLSGNPIAMAAGFACLNEVAQPGIHETLDELTTRLAEGLLEAAEEANIPLVVNHVGGMFGIFFTDAESVTCYQDVMACDVERFKRFFHLMLEEGVYLAPSAFEAGFMSVAHSMDDINNTIDAARRVFATL.

Residue Lys-265 is modified to N6-(pyridoxal phosphate)lysine.

Belongs to the class-III pyridoxal-phosphate-dependent aminotransferase family. HemL subfamily. As to quaternary structure, homodimer. Pyridoxal 5'-phosphate serves as cofactor.

It is found in the cytoplasm. It catalyses the reaction (S)-4-amino-5-oxopentanoate = 5-aminolevulinate. It participates in porphyrin-containing compound metabolism; protoporphyrin-IX biosynthesis; 5-aminolevulinate from L-glutamyl-tRNA(Glu): step 2/2. In Salmonella agona (strain SL483), this protein is Glutamate-1-semialdehyde 2,1-aminomutase.